A 232-amino-acid chain; its full sequence is Large ribosomal subunit protein uL1 (232 aa).

This sequence belongs to the universal ribosomal protein uL1 family. As to quaternary structure, part of the 50S ribosomal subunit.

In terms of biological role, binds directly to 23S rRNA. The L1 stalk is quite mobile in the ribosome, and is involved in E site tRNA release. Its function is as follows. Protein L1 is also a translational repressor protein, it controls the translation of the L11 operon by binding to its mRNA. In Paraburkholderia phytofirmans (strain DSM 17436 / LMG 22146 / PsJN) (Burkholderia phytofirmans), this protein is Large ribosomal subunit protein uL1.